The following is a 525-amino-acid chain: GMP synthase [glutamine-hydrolyzing] (525 aa).

In terms of domain architecture, Glutamine amidotransferase type-1 spans 8–207 (KILILDFGSQ…ALDICQCDAN (200 aa)). Catalysis depends on Cys85, which acts as the Nucleophile. Active-site residues include His181 and Glu183. Residues 208–400 (WKPASIIEDA…LGLPYDMLYR (193 aa)) enclose the GMPS ATP-PPase domain. 235–241 (SGGVDSS) serves as a coordination point for ATP.

In terms of assembly, homodimer.

The enzyme catalyses XMP + L-glutamine + ATP + H2O = GMP + L-glutamate + AMP + diphosphate + 2 H(+). Its pathway is purine metabolism; GMP biosynthesis; GMP from XMP (L-Gln route): step 1/1. In terms of biological role, catalyzes the synthesis of GMP from XMP. This Shewanella woodyi (strain ATCC 51908 / MS32) protein is GMP synthase [glutamine-hydrolyzing].